Reading from the N-terminus, the 194-residue chain is NADH-quinone oxidoreductase subunit B (194 aa).

Positions 73, 74, 138, and 168 each coordinate [4Fe-4S] cluster.

This sequence belongs to the complex I 20 kDa subunit family. As to quaternary structure, NDH-1 is composed of 14 different subunits. Subunits NuoB, C, D, E, F, and G constitute the peripheral sector of the complex. The cofactor is [4Fe-4S] cluster.

It is found in the cell inner membrane. It catalyses the reaction a quinone + NADH + 5 H(+)(in) = a quinol + NAD(+) + 4 H(+)(out). Its function is as follows. NDH-1 shuttles electrons from NADH, via FMN and iron-sulfur (Fe-S) centers, to quinones in the respiratory chain. The immediate electron acceptor for the enzyme in this species is believed to be ubiquinone. Couples the redox reaction to proton translocation (for every two electrons transferred, four hydrogen ions are translocated across the cytoplasmic membrane), and thus conserves the redox energy in a proton gradient. This is NADH-quinone oxidoreductase subunit B from Rhizobium johnstonii (strain DSM 114642 / LMG 32736 / 3841) (Rhizobium leguminosarum bv. viciae).